A 172-amino-acid polypeptide reads, in one-letter code: Disulfide bond formation protein B (172 aa).

Residues Met1–Pro13 lie on the Cytoplasmic side of the membrane. The chain crosses the membrane as a helical span at residues Trp14–Phe30. At Phe31–Thr48 the chain is on the periplasmic side. Residues Cys40 and Cys43 are joined by a disulfide bond. A helical membrane pass occupies residues Ala49 to Pro64. Residues Glu65 to Leu71 lie on the Cytoplasmic side of the membrane. The chain crosses the membrane as a helical span at residues Leu72–Arg89. Residues Glu90 to Ala145 are Periplasmic-facing. Cys105 and Cys131 are disulfide-bonded. A helical membrane pass occupies residues Trp146–Ser164. Over Arg165–Leu172 the chain is Cytoplasmic.

Belongs to the DsbB family.

It is found in the cell inner membrane. Its function is as follows. Required for disulfide bond formation in some periplasmic proteins. Acts by oxidizing the DsbA protein. The sequence is that of Disulfide bond formation protein B from Pseudoalteromonas translucida (strain TAC 125).